The primary structure comprises 273 residues: 3-methyl-2-oxobutanoate hydroxymethyltransferase (273 aa).

2 residues coordinate Mg(2+): D53 and D92. Residues 53 to 54, D92, and K122 contribute to the 3-methyl-2-oxobutanoate site; that span reads DS. E124 is a Mg(2+) binding site. The Proton acceptor role is filled by E191.

It belongs to the PanB family. As to quaternary structure, homodecamer; pentamer of dimers. Requires Mg(2+) as cofactor.

Its subcellular location is the cytoplasm. The catalysed reaction is 3-methyl-2-oxobutanoate + (6R)-5,10-methylene-5,6,7,8-tetrahydrofolate + H2O = 2-dehydropantoate + (6S)-5,6,7,8-tetrahydrofolate. The protein operates within cofactor biosynthesis; (R)-pantothenate biosynthesis; (R)-pantoate from 3-methyl-2-oxobutanoate: step 1/2. Functionally, catalyzes the reversible reaction in which hydroxymethyl group from 5,10-methylenetetrahydrofolate is transferred onto alpha-ketoisovalerate to form ketopantoate. The chain is 3-methyl-2-oxobutanoate hydroxymethyltransferase from Bacteroides thetaiotaomicron (strain ATCC 29148 / DSM 2079 / JCM 5827 / CCUG 10774 / NCTC 10582 / VPI-5482 / E50).